The sequence spans 127 residues: Fluoride-specific ion channel FluC (127 aa).

Helical transmembrane passes span leucine 4–serine 24, glycine 39–isoleucine 59, alanine 68–tyrosine 88, and valine 102–leucine 122. Glycine 78 and threonine 81 together coordinate Na(+).

This sequence belongs to the fluoride channel Fluc/FEX (TC 1.A.43) family.

The protein localises to the cell inner membrane. The catalysed reaction is fluoride(in) = fluoride(out). Its activity is regulated as follows. Na(+) is not transported, but it plays an essential structural role and its presence is essential for fluoride channel function. Fluoride-specific ion channel. Important for reducing fluoride concentration in the cell, thus reducing its toxicity. In Thermotoga maritima (strain ATCC 43589 / DSM 3109 / JCM 10099 / NBRC 100826 / MSB8), this protein is Fluoride-specific ion channel FluC.